Reading from the N-terminus, the 256-residue chain is 1-(5-phosphoribosyl)-5-[(5-phosphoribosylamino)methylideneamino] imidazole-4-carboxamide isomerase (256 aa).

Asp8 serves as the catalytic Proton acceptor. Asp129 serves as the catalytic Proton donor.

The protein belongs to the HisA/HisF family.

The protein resides in the cytoplasm. The enzyme catalyses 1-(5-phospho-beta-D-ribosyl)-5-[(5-phospho-beta-D-ribosylamino)methylideneamino]imidazole-4-carboxamide = 5-[(5-phospho-1-deoxy-D-ribulos-1-ylimino)methylamino]-1-(5-phospho-beta-D-ribosyl)imidazole-4-carboxamide. It functions in the pathway amino-acid biosynthesis; L-histidine biosynthesis; L-histidine from 5-phospho-alpha-D-ribose 1-diphosphate: step 4/9. The polypeptide is 1-(5-phosphoribosyl)-5-[(5-phosphoribosylamino)methylideneamino] imidazole-4-carboxamide isomerase (Picosynechococcus sp. (strain ATCC 27264 / PCC 7002 / PR-6) (Agmenellum quadruplicatum)).